Consider the following 316-residue polypeptide: Homoserine kinase (316 aa).

96–106 (PHGRGLGSSGA) contributes to the ATP binding site.

This sequence belongs to the GHMP kinase family. Homoserine kinase subfamily.

It is found in the cytoplasm. It carries out the reaction L-homoserine + ATP = O-phospho-L-homoserine + ADP + H(+). It functions in the pathway amino-acid biosynthesis; L-threonine biosynthesis; L-threonine from L-aspartate: step 4/5. Functionally, catalyzes the ATP-dependent phosphorylation of L-homoserine to L-homoserine phosphate. The chain is Homoserine kinase from Clavibacter michiganensis subsp. michiganensis (strain NCPPB 382).